The primary structure comprises 151 residues: Ribosome maturation factor RimP (151 aa).

The protein belongs to the RimP family.

It is found in the cytoplasm. Its function is as follows. Required for maturation of 30S ribosomal subunits. The chain is Ribosome maturation factor RimP from Thermoanaerobacter pseudethanolicus (strain ATCC 33223 / 39E) (Clostridium thermohydrosulfuricum).